Consider the following 297-residue polypeptide: UDP-N-acetylenolpyruvoylglucosamine reductase (297 aa).

In terms of domain architecture, FAD-binding PCMH-type spans 27–191; the sequence is TGGNADIFVM…LDATFSLELE (165 aa). Arginine 170 is a catalytic residue. The Proton donor role is filled by serine 220. Glutamate 290 is an active-site residue.

This sequence belongs to the MurB family. FAD is required as a cofactor.

It localises to the cytoplasm. The enzyme catalyses UDP-N-acetyl-alpha-D-muramate + NADP(+) = UDP-N-acetyl-3-O-(1-carboxyvinyl)-alpha-D-glucosamine + NADPH + H(+). It functions in the pathway cell wall biogenesis; peptidoglycan biosynthesis. Cell wall formation. The chain is UDP-N-acetylenolpyruvoylglucosamine reductase from Listeria welshimeri serovar 6b (strain ATCC 35897 / DSM 20650 / CCUG 15529 / CIP 8149 / NCTC 11857 / SLCC 5334 / V8).